The chain runs to 145 residues: 3-dehydroquinate dehydratase (145 aa).

Y24 functions as the Proton acceptor in the catalytic mechanism. The substrate site is built by N76, H82, and D89. H102 functions as the Proton donor in the catalytic mechanism. Residues 103–104 (VS) and R113 each bind substrate.

Belongs to the type-II 3-dehydroquinase family. In terms of assembly, homododecamer.

It catalyses the reaction 3-dehydroquinate = 3-dehydroshikimate + H2O. The protein operates within metabolic intermediate biosynthesis; chorismate biosynthesis; chorismate from D-erythrose 4-phosphate and phosphoenolpyruvate: step 3/7. Catalyzes a trans-dehydration via an enolate intermediate. This chain is 3-dehydroquinate dehydratase, found in Herminiimonas arsenicoxydans.